A 274-amino-acid chain; its full sequence is Long chain fatty acid elongase 6 (274 aa).

At 1–30 the chain is on the extracellular side; the sequence is MPQGEVSFFEVLTTAPFSHELSKKHIAQTQ. A helical transmembrane segment spans residues 31–51; the sequence is YAAFWISMAYVVVIFGLKAVM. Residues 52 to 69 are Cytoplasmic-facing; sequence TNRKPFDLTGPLNLWNAG. The chain crosses the membrane as a helical span at residues 70–90; it reads LAIFSTLGSLATTFGLLHEFF. Over 91-111 the chain is Extracellular; sequence SRGFFESYIHIGDFYNGLSGM. A helical membrane pass occupies residues 112-132; the sequence is FTWLFVLSKVAEFGDTLFIIL. Residues 133–135 are Cytoplasmic-facing; the sequence is RKK. The helical transmembrane segment at 136-156 threads the bilayer; sequence PLMFLHWYHHVLTMNYAFMSF. The Extracellular segment spans residues 157-159; the sequence is EAN. The helical transmembrane segment at 160-180 threads the bilayer; sequence LGFNTWITWMNFSVHSIMYGY. The Cytoplasmic portion of the chain corresponds to 181–202; the sequence is YMLRSFGVKVPAWIAKNITTMQ. A helical membrane pass occupies residues 203 to 223; that stretch reads ILQFVITHFILFHVGYLAVTG. The Extracellular portion of the chain corresponds to 224–230; it reads QSVDSTP. Residues 231–251 form a helical membrane-spanning segment; sequence GYYWFCLLMEISYVVLFGNFY. At 252 to 274 the chain is on the cytoplasmic side; sequence YQSYIKGGGKKFNAEKKTEKKIE.

The protein belongs to the ELO family. In terms of tissue distribution, expressed in the gut, neurons, pharynx and muscles of the vulva.

The protein localises to the membrane. The enzyme catalyses isopentadecanoyl-CoA + malonyl-CoA + H(+) = 3-oxoisoheptadecanoyl-CoA + CO2 + CoA. It participates in lipid metabolism; fatty acid biosynthesis. Functionally, catalyzes the first and rate-limiting reaction of the four reactions that constitute the long-chain fatty acids elongation cycle. Uses malonyl-CoA to add 2 carbons per cycle to the chain of long-chain fatty acids. Condensing enzyme required for the formation of isoheptadecanoate (C17iso), which plays critical roles in animal development and growth. This is Long chain fatty acid elongase 6 (elo-6) from Caenorhabditis elegans.